The sequence spans 245 residues: Orotidine 5'-phosphate decarboxylase (245 aa).

Substrate contacts are provided by residues Asp22, Lys44, Asp71 to Thr80, Thr131, Arg192, Gln201, Gly221, and Arg222. Lys73 functions as the Proton donor in the catalytic mechanism.

It belongs to the OMP decarboxylase family. Type 1 subfamily. In terms of assembly, homodimer.

The enzyme catalyses orotidine 5'-phosphate + H(+) = UMP + CO2. Its pathway is pyrimidine metabolism; UMP biosynthesis via de novo pathway; UMP from orotate: step 2/2. Its function is as follows. Catalyzes the decarboxylation of orotidine 5'-monophosphate (OMP) to uridine 5'-monophosphate (UMP). The protein is Orotidine 5'-phosphate decarboxylase of Escherichia coli (strain K12 / MC4100 / BW2952).